A 328-amino-acid chain; its full sequence is Malate dehydrogenase (328 aa).

NAD(+) is bound at residue 12 to 18; sequence GAAGQIG. Residues arginine 93 and arginine 99 each coordinate substrate. Residues asparagine 106, glutamine 113, and 130 to 132 contribute to the NAD(+) site; that span reads TGN. Asparagine 132 and arginine 163 together coordinate substrate. Residue histidine 188 is the Proton acceptor of the active site.

The protein belongs to the LDH/MDH superfamily. MDH type 2 family.

It carries out the reaction (S)-malate + NAD(+) = oxaloacetate + NADH + H(+). Its function is as follows. Catalyzes the reversible oxidation of malate to oxaloacetate. This chain is Malate dehydrogenase, found in Kocuria rhizophila (strain ATCC 9341 / DSM 348 / NBRC 103217 / DC2201).